A 379-amino-acid chain; its full sequence is MSGLEAIWWRERPGPLGALAGAPLLLAEAPFRAAAALRGALYDRGVLPAVRAGAPVVSIGNLAVGGAGKTPAALAVAARLAGRGRRVAILSRGYGAARADARVASDGAGALLPAAEAGDEPALLARRLPGVAVLCGPRRAELARTAVEALGADALVLDDGFQHRALARDLDVVVLDASNPFGNGHLLPRGPNREPRTALRRAGLVWLSHADRAAPERLEALRALARDATGRAPVESRHAATALLDGALREAGSLEALRGRRVAALSGLARPAGFLRTLEALGAEVALARAFPDHHRFTAGELEAVLRDGDAAGCAWVVTTEKDAVRLDPALAAGAAGRLRVVRVDAELLRGADVLEAALDAALAAAAPQPRPAPRAPVS.

63-70 is a binding site for ATP; that stretch reads AVGGAGKT.

The protein belongs to the LpxK family.

It carries out the reaction a lipid A disaccharide + ATP = a lipid IVA + ADP + H(+). It participates in glycolipid biosynthesis; lipid IV(A) biosynthesis; lipid IV(A) from (3R)-3-hydroxytetradecanoyl-[acyl-carrier-protein] and UDP-N-acetyl-alpha-D-glucosamine: step 6/6. Functionally, transfers the gamma-phosphate of ATP to the 4'-position of a tetraacyldisaccharide 1-phosphate intermediate (termed DS-1-P) to form tetraacyldisaccharide 1,4'-bis-phosphate (lipid IVA). In Anaeromyxobacter dehalogenans (strain 2CP-1 / ATCC BAA-258), this protein is Tetraacyldisaccharide 4'-kinase.